We begin with the raw amino-acid sequence, 435 residues long: Trigger factor (435 aa).

One can recognise a PPIase FKBP-type domain in the interval 163–248 (GDYVTFDFKG…IKEIKVKELP (86 aa)).

Belongs to the FKBP-type PPIase family. Tig subfamily.

It is found in the cytoplasm. It carries out the reaction [protein]-peptidylproline (omega=180) = [protein]-peptidylproline (omega=0). Functionally, involved in protein export. Acts as a chaperone by maintaining the newly synthesized protein in an open conformation. Functions as a peptidyl-prolyl cis-trans isomerase. This chain is Trigger factor, found in Geotalea daltonii (strain DSM 22248 / JCM 15807 / FRC-32) (Geobacter daltonii).